The following is a 229-amino-acid chain: Potassium/proton antiporter CemA (229 aa).

A run of 3 helical transmembrane segments spans residues 7 to 27 (LTPFPYLASIVFLPWWISLSF), 106 to 126 (IVLHFSTNIICFAILSGYYFL), and 189 to 209 (IISGLVSTFPVILDTILKYWI).

The protein belongs to the CemA family.

The protein localises to the plastid. The protein resides in the chloroplast inner membrane. The enzyme catalyses K(+)(in) + H(+)(out) = K(+)(out) + H(+)(in). Functionally, contributes to K(+)/H(+) antiport activity by supporting proton efflux to control proton extrusion and homeostasis in chloroplasts in a light-dependent manner to modulate photosynthesis. Prevents excessive induction of non-photochemical quenching (NPQ) under continuous-light conditions. Indirectly promotes efficient inorganic carbon uptake into chloroplasts. In Calycanthus floridus var. glaucus (Eastern sweetshrub), this protein is Potassium/proton antiporter CemA.